An 894-amino-acid chain; its full sequence is Phosphoenolpyruvate carboxylase (894 aa).

Active-site residues include His143 and Lys556.

This sequence belongs to the PEPCase type 1 family. Requires Mg(2+) as cofactor.

It catalyses the reaction oxaloacetate + phosphate = phosphoenolpyruvate + hydrogencarbonate. Functionally, forms oxaloacetate, a four-carbon dicarboxylic acid source for the tricarboxylic acid cycle. The sequence is that of Phosphoenolpyruvate carboxylase from Acinetobacter baylyi (strain ATCC 33305 / BD413 / ADP1).